The following is a 658-amino-acid chain: Putative arrestin-related trafficking adapter C2D10.04 (658 aa).

Disordered stretches follow at residues 21-107 and 638-658; these read LHHQ…LTWS and REEAPHRSLSRTVSRSFEIPR. Over residues 39 to 81 the composition is skewed to low complexity; sequence NRSSNSGLNRRNSVFGLPSSGLSSRLSKPSLSSINNSNNSSSN. Polar residues predominate over residues 96-107; sequence RNMSNKPPLTWS. The residue at position 653 (serine 653) is a Phosphoserine.

It belongs to the ALY1 family.

The protein resides in the cytoplasm. Its function is as follows. May regulate endocytosis in response to extracellular stimuli. The chain is Putative arrestin-related trafficking adapter C2D10.04 from Schizosaccharomyces pombe (strain 972 / ATCC 24843) (Fission yeast).